The primary structure comprises 366 residues: DNA primase large subunit PriL (366 aa).

Cys-227, Cys-298, Cys-307, and Cys-314 together coordinate [4Fe-4S] cluster.

It belongs to the eukaryotic-type primase large subunit family. In terms of assembly, heterodimer of a small subunit (PriS) and a large subunit (PriL). [4Fe-4S] cluster is required as a cofactor.

Its function is as follows. Regulatory subunit of DNA primase, an RNA polymerase that catalyzes the synthesis of short RNA molecules used as primers for DNA polymerase during DNA replication. Stabilizes and modulates the activity of the small subunit, increasing the rate of DNA synthesis, and conferring RNA synthesis capability. The DNA polymerase activity may enable DNA primase to also catalyze primer extension after primer synthesis. May also play a role in DNA repair. This chain is DNA primase large subunit PriL, found in Methanocella arvoryzae (strain DSM 22066 / NBRC 105507 / MRE50).